The following is a 508-amino-acid chain: Photosystem II CP47 reaction center protein (508 aa).

Helical transmembrane passes span 21-36 (SVHI…WAGS), 101-115 (IVFS…IWHW), 140-156 (GIHL…FGAF), 203-218 (IAAG…FHLS), 237-252 (VLSS…AFVV), and 457-472 (SFAL…HGAR).

This sequence belongs to the PsbB/PsbC family. PsbB subfamily. PSII is composed of 1 copy each of membrane proteins PsbA, PsbB, PsbC, PsbD, PsbE, PsbF, PsbH, PsbI, PsbJ, PsbK, PsbL, PsbM, PsbT, PsbX, PsbY, PsbZ, Psb30/Ycf12, at least 3 peripheral proteins of the oxygen-evolving complex and a large number of cofactors. It forms dimeric complexes. Requires Binds multiple chlorophylls. PSII binds additional chlorophylls, carotenoids and specific lipids. as cofactor.

It localises to the plastid. The protein resides in the chloroplast thylakoid membrane. Its function is as follows. One of the components of the core complex of photosystem II (PSII). It binds chlorophyll and helps catalyze the primary light-induced photochemical processes of PSII. PSII is a light-driven water:plastoquinone oxidoreductase, using light energy to abstract electrons from H(2)O, generating O(2) and a proton gradient subsequently used for ATP formation. This Nymphaea alba (White water-lily) protein is Photosystem II CP47 reaction center protein.